Here is a 122-residue protein sequence, read N- to C-terminus: UPF0102 protein Dred_2035 (122 aa).

The protein belongs to the UPF0102 family.

The polypeptide is UPF0102 protein Dred_2035 (Desulforamulus reducens (strain ATCC BAA-1160 / DSM 100696 / MI-1) (Desulfotomaculum reducens)).